A 168-amino-acid chain; its full sequence is S-ribosylhomocysteine lyase (168 aa).

Residues His-54, His-58, and Cys-128 each coordinate Fe cation.

It belongs to the LuxS family. Homodimer. Fe cation serves as cofactor.

It carries out the reaction S-(5-deoxy-D-ribos-5-yl)-L-homocysteine = (S)-4,5-dihydroxypentane-2,3-dione + L-homocysteine. Involved in the synthesis of autoinducer 2 (AI-2) which is secreted by bacteria and is used to communicate both the cell density and the metabolic potential of the environment. The regulation of gene expression in response to changes in cell density is called quorum sensing. Catalyzes the transformation of S-ribosylhomocysteine (RHC) to homocysteine (HC) and 4,5-dihydroxy-2,3-pentadione (DPD). The polypeptide is S-ribosylhomocysteine lyase (Neisseria meningitidis serogroup C / serotype 2a (strain ATCC 700532 / DSM 15464 / FAM18)).